Here is a 512-residue protein sequence, read N- to C-terminus: Endo-1,4-beta-xylanase A (512 aa).

Residues 1-30 (MKRKVKKMAAMATSIIMAIMIILHSIPVLA) form the signal peptide. The 196-residue stretch at 33-228 (IIYDNETGTH…SSGYANVYKN (196 aa)) folds into the GH11 domain. Catalysis depends on Glu-124, which acts as the Nucleophile. The Proton donor role is filled by Glu-215. 2 consecutive CBM6 domains span residues 251-371 (SIIE…FIFS) and 388-508 (SIIQ…FVFS). Residues Glu-254 and Glu-256 each contribute to the Ca(2+) site. Thr-271 lines the D-xylotriose pocket. Ca(2+) is bound at residue Arg-276. Residues 279–340 (GYIENGNTVT…SSTGSWNTYQ (62 aa)) form repeat 1. The tract at residues 279 to 477 (GYIENGNTVT…GSTGSFDTYR (199 aa)) is 2 X 61 AA approximate repeats. Residues Tyr-280, Asn-337, and Asn-364 each contribute to the D-xylotriose site. 3 residues coordinate D-xylobiose: Tyr-280, Asn-337, and Asn-364. Ca(2+) contacts are provided by Asp-366, Gln-391, Glu-393, and Ser-413. Repeat unit 2 spans residues 416–477 (GYIENGYSTT…GSTGSFDTYR (62 aa)). Tyr-417, Asp-474, and Asn-501 together coordinate D-xylotriose. Residue Asp-503 coordinates Ca(2+).

This sequence belongs to the glycosyl hydrolase 11 (cellulase G) family.

It carries out the reaction Endohydrolysis of (1-&gt;4)-beta-D-xylosidic linkages in xylans.. It participates in glycan degradation; xylan degradation. This Thermoclostridium stercorarium (Clostridium stercorarium) protein is Endo-1,4-beta-xylanase A (xynA).